The chain runs to 135 residues: Holo-[acyl-carrier-protein] synthase (135 aa).

Residues aspartate 8 and glutamate 57 each contribute to the Mg(2+) site.

This sequence belongs to the P-Pant transferase superfamily. AcpS family. Mg(2+) is required as a cofactor.

It is found in the cytoplasm. It catalyses the reaction apo-[ACP] + CoA = holo-[ACP] + adenosine 3',5'-bisphosphate + H(+). In terms of biological role, transfers the 4'-phosphopantetheine moiety from coenzyme A to a Ser of acyl-carrier-protein. This chain is Holo-[acyl-carrier-protein] synthase, found in Xanthobacter autotrophicus (strain ATCC BAA-1158 / Py2).